Here is a 345-residue protein sequence, read N- to C-terminus: Phosphoribosylformylglycinamidine cyclo-ligase (345 aa).

The protein belongs to the AIR synthase family.

The protein resides in the cytoplasm. It catalyses the reaction 2-formamido-N(1)-(5-O-phospho-beta-D-ribosyl)acetamidine + ATP = 5-amino-1-(5-phospho-beta-D-ribosyl)imidazole + ADP + phosphate + H(+). The protein operates within purine metabolism; IMP biosynthesis via de novo pathway; 5-amino-1-(5-phospho-D-ribosyl)imidazole from N(2)-formyl-N(1)-(5-phospho-D-ribosyl)glycinamide: step 2/2. The chain is Phosphoribosylformylglycinamidine cyclo-ligase from Shewanella frigidimarina (strain NCIMB 400).